Consider the following 445-residue polypeptide: AVMGRNLALNIESRGYTVSIFNRSREKTEEVVAENPGKKLVPYYTVKEFVESLETPRRILLMVKAGAGTDAAIDSLKPYLDKGDIIIDGGNTFFQDTIRRNRELSAEGFNFIGTGVSGGEEGALKGPSIMPGGQKEAYELVAPILTKIAAVAEDGEPCVIYIGADGAGHYVKMVHNGIEYGDMQLIAEAYSLLKGGLNLSNEELATTFTEWNEGELSSYLIDITKDIFTKKDEEGKYLVDVILDEAANKGTGKWTSQSSLDLGEPLSLITESVFARYISSLKDQRVAASKVLSGPQAKLAGDKAEFVEKVRRALYLGKIVSYAQGFSQLRAASDEYNWDLNYGEIAKIFRAGCIIRAQFLQKITDAYAENKGIANLLLAPYFKNIADEYQQALRDVVAYAVQNGIPVPTFSAAVAYYDSYRSAVLPANLIQAQRDYFGAHTYKRT.

NADP(+) is bound by residues Ala1–Gly4, Asn22–Ser24, Val63–Ala65, and Asn91. Substrate-binding positions include Asn91 and Ser117–Gly119. Lys172 serves as the catalytic Proton acceptor. Residue His175–Asn176 coordinates substrate. Glu179 functions as the Proton donor in the catalytic mechanism. Substrate is bound by residues Tyr180, Lys249, Arg276, Arg434, and His440.

This sequence belongs to the 6-phosphogluconate dehydrogenase family. In terms of assembly, homodimer.

The catalysed reaction is 6-phospho-D-gluconate + NADP(+) = D-ribulose 5-phosphate + CO2 + NADPH. The protein operates within carbohydrate degradation; pentose phosphate pathway; D-ribulose 5-phosphate from D-glucose 6-phosphate (oxidative stage): step 3/3. Functionally, catalyzes the oxidative decarboxylation of 6-phosphogluconate to ribulose 5-phosphate and CO(2), with concomitant reduction of NADP to NADPH. The sequence is that of 6-phosphogluconate dehydrogenase, decarboxylating (gnd) from Citrobacter freundii.